The following is a 59-amino-acid chain: Cecropin-B1 (59 aa).

The N-terminal stretch at 1-23 is a signal peptide; sequence MNFNKLFLIVILAALLLLGQTEA. L57 bears the Leucine amide mark.

The protein belongs to the cecropin family.

Its subcellular location is the secreted. Functionally, cecropins have lytic and antibacterial activity against several Gram-positive and Gram-negative bacteria. This is Cecropin-B1 (CECB1) from Culex pipiens pipiens (Northern house mosquito).